Consider the following 1474-residue polypeptide: Alpha-2-macroglobulin (1474 aa).

Positions 1–23 are cleaved as a signal peptide; sequence MGKNKLLHPSLVLLLLVLLPTDA. A disulfide bridge connects residues Cys48 and Cys86. Residue Asn55 is glycosylated (N-linked (GlcNAc...) (complex) asparagine). Asn70 and Asn247 each carry an N-linked (GlcNAc...) asparagine glycan. Disulfide bonds link Cys251/Cys299 and Cys269/Cys287. N-linked (GlcNAc...) asparagine glycans are attached at residues Asn396 and Asn410. Intrachain disulfides connect Cys470-Cys563, Cys595-Cys771, Cys642-Cys689, Cys821-Cys849, Cys847-Cys883, Cys921-Cys1321, Cys1079-Cys1127, and Cys1352-Cys1467. Residues 690–728 form a bait region region; that stretch reads PQLQQYEMHGPEGLRVGFYESDVMGRGHARLVHVEEPHT. Isoglutamyl lysine isopeptide (Gln-Lys) (interchain with K-? in other proteins) cross-links involve residues Gln693 and Gln694. Inhibitory stretches follow at residues 704-709, 719-723, and 730-735; these read RVGFYE, RLVHV, and TVRKYF. Asn869 carries an N-linked (GlcNAc...) asparagine glycan. A cross-link (isoglutamyl cysteine thioester (Cys-Gln)) is located at residues 972–975; it reads CGEQ. The N-linked (GlcNAc...) asparagine glycan is linked to Asn991. N-linked (GlcNAc...) (complex) asparagine glycosylation is present at Asn1424.

Belongs to the protease inhibitor I39 (alpha-2-macroglobulin) family. In terms of assembly, homotetramer; disulfide-linked. Secreted in plasma.

The protein localises to the secreted. Is able to inhibit all four classes of proteinases by a unique 'trapping' mechanism. This protein has a peptide stretch, called the 'bait region' which contains specific cleavage sites for different proteinases. When a proteinase cleaves the bait region, a conformational change is induced in the protein which traps the proteinase. The entrapped enzyme remains active against low molecular weight substrates (activity against high molecular weight substrates is greatly reduced). Following cleavage in the bait region, a thioester bond is hydrolyzed and mediates the covalent binding of the protein to the proteinase. The chain is Alpha-2-macroglobulin (A2M) from Homo sapiens (Human).